We begin with the raw amino-acid sequence, 245 residues long: D-aminoacyl-tRNA deacylase (245 aa).

The protein belongs to the DtdA deacylase family. As to quaternary structure, monomer. The cofactor is Zn(2+).

The enzyme catalyses a D-aminoacyl-tRNA + H2O = a tRNA + a D-alpha-amino acid + H(+). It catalyses the reaction glycyl-tRNA(Ala) + H2O = tRNA(Ala) + glycine + H(+). In terms of biological role, D-aminoacyl-tRNA deacylase with broad substrate specificity. By recycling D-aminoacyl-tRNA to D-amino acids and free tRNA molecules, this enzyme counteracts the toxicity associated with the formation of D-aminoacyl-tRNA entities in vivo. The protein is D-aminoacyl-tRNA deacylase of Ignicoccus hospitalis (strain KIN4/I / DSM 18386 / JCM 14125).